The following is a 422-amino-acid chain: 26S proteasome non-ATPase regulatory subunit 11 (422 aa).

The PCI domain occupies 224–392 (DWKTAYSYFY…GVLIIFDEPP (169 aa)).

This sequence belongs to the proteasome subunit S9 family. In terms of assembly, component of the 19S proteasome regulatory particle complex. The 26S proteasome consists of a 20S core particle (CP) and two 19S regulatory subunits (RP). The regulatory particle is made of a lid composed of 9 subunits including PSMD11, a base containing 6 ATPases and few additional components.

The protein resides in the nucleus. The protein localises to the cytoplasm. It is found in the cytosol. Functionally, component of the 26S proteasome, a multiprotein complex involved in the ATP-dependent degradation of ubiquitinated proteins. This complex plays a key role in the maintenance of protein homeostasis by removing misfolded or damaged proteins, which could impair cellular functions, and by removing proteins whose functions are no longer required. Therefore, the proteasome participates in numerous cellular processes, including cell cycle progression, apoptosis, or DNA damage repair. In the complex, PSMD11 is required for proteasome assembly. Plays a key role in increased proteasome activity in embryonic stem cells (ESCs): its high expression in ESCs promotes enhanced assembly of the 26S proteasome, followed by higher proteasome activity. This is 26S proteasome non-ATPase regulatory subunit 11 (psmd11) from Xenopus tropicalis (Western clawed frog).